The sequence spans 182 residues: tRNA-splicing endonuclease (182 aa).

Residues Y119, H127, and K158 contribute to the active site.

This sequence belongs to the tRNA-intron endonuclease family. Archaeal short subfamily. As to quaternary structure, homotetramer; although the tetramer contains four active sites, only two participate in the cleavage. Therefore, it should be considered as a dimer of dimers.

It carries out the reaction pretRNA = a 3'-half-tRNA molecule with a 5'-OH end + a 5'-half-tRNA molecule with a 2',3'-cyclic phosphate end + an intron with a 2',3'-cyclic phosphate and a 5'-hydroxyl terminus.. Endonuclease that removes tRNA introns. Cleaves pre-tRNA at the 5'- and 3'-splice sites to release the intron. The products are an intron and two tRNA half-molecules bearing 2',3' cyclic phosphate and 5'-OH termini. Recognizes a pseudosymmetric substrate in which 2 bulged loops of 3 bases are separated by a stem of 4 bp. The protein is tRNA-splicing endonuclease of Saccharolobus islandicus (strain Y.N.15.51 / Yellowstone #2) (Sulfolobus islandicus).